The sequence spans 205 residues: Golgi apparatus membrane protein TVP23 homolog B (205 aa).

Position 1 is an N-acetylmethionine (Met1). Positions 1 to 21 are disordered; sequence MLQQDSNDDTEDVSLFDAEEE. 4 helical membrane passes run 34–53, 54–72, 126–146, and 152–172; these read PVAS…VYLL, CELL…ILLL, IFWL…FSAL, and KWLA…YGYI.

This sequence belongs to the TVP23 family.

It is found in the membrane. The sequence is that of Golgi apparatus membrane protein TVP23 homolog B (TVP23B) from Pongo abelii (Sumatran orangutan).